The sequence spans 451 residues: Tubulin beta-1 chain (451 aa).

The short motif at 1–4 is the MREI motif element; that stretch reads MREI. GTP is bound by residues Q11, E69, S138, G142, T143, and G144. E69 serves as a coordination point for Mg(2+). Position 172 is a phosphoserine; by CDK1 (S172). 2 residues coordinate GTP: N204 and N226. The tract at residues 430-451 is disordered; sequence AGLEDSEEDVEEAEVEAEDKDH. Over residues 433–451 the composition is skewed to acidic residues; it reads EDSEEDVEEAEVEAEDKDH. Residue S435 is modified to Phosphoserine. Residue E440 is modified to 5-glutamyl polyglutamate.

The protein belongs to the tubulin family. Dimer of alpha and beta chains. A typical microtubule is a hollow water-filled tube with an outer diameter of 25 nm and an inner diameter of 15 nM. Alpha-beta heterodimers associate head-to-tail to form protofilaments running lengthwise along the microtubule wall with the beta-tubulin subunit facing the microtubule plus end conferring a structural polarity. Microtubules usually have 13 protofilaments but different protofilament numbers can be found in some organisms and specialized cells. Interacts with RANBP10. It depends on Mg(2+) as a cofactor. Post-translationally, some glutamate residues at the C-terminus are polyglycylated, resulting in polyglycine chains on the gamma-carboxyl group. Glycylation is mainly limited to tubulin incorporated into axonemes (cilia and flagella) whereas glutamylation is prevalent in neuronal cells, centrioles, axonemes, and the mitotic spindle. Both modifications can coexist on the same protein on adjacent residues, and lowering polyglycylation levels increases polyglutamylation, and reciprocally. Cilia and flagella glycylation is required for their stability and maintenance. Flagella glycylation controls sperm motility. In terms of processing, some glutamate residues at the C-terminus are polyglutamylated, resulting in polyglutamate chains on the gamma-carboxyl group. Polyglutamylation plays a key role in microtubule severing by spastin (SPAST). SPAST preferentially recognizes and acts on microtubules decorated with short polyglutamate tails: severing activity by SPAST increases as the number of glutamates per tubulin rises from one to eight, but decreases beyond this glutamylation threshold. Glutamylation is also involved in cilia motility. Phosphorylated on Ser-172 by CDK1 during the cell cycle, from metaphase to telophase, but not in interphase. This phosphorylation inhibits tubulin incorporation into microtubules.

Its subcellular location is the cytoplasm. The protein localises to the cytoskeleton. Tubulin is the major constituent of microtubules, a cylinder consisting of laterally associated linear protofilaments composed of alpha- and beta-tubulin heterodimers. Microtubules grow by the addition of GTP-tubulin dimers to the microtubule end, where a stabilizing cap forms. Below the cap, tubulin dimers are in GDP-bound state, owing to GTPase activity of alpha-tubulin. The protein is Tubulin beta-1 chain (Tubb1) of Mus musculus (Mouse).